The sequence spans 153 residues: 3-hydroxyacyl-[acyl-carrier-protein] dehydratase FabZ (153 aa).

Histidine 59 is a catalytic residue.

Belongs to the thioester dehydratase family. FabZ subfamily.

The protein resides in the cytoplasm. The catalysed reaction is a (3R)-hydroxyacyl-[ACP] = a (2E)-enoyl-[ACP] + H2O. Its function is as follows. Involved in unsaturated fatty acids biosynthesis. Catalyzes the dehydration of short chain beta-hydroxyacyl-ACPs and long chain saturated and unsaturated beta-hydroxyacyl-ACPs. The chain is 3-hydroxyacyl-[acyl-carrier-protein] dehydratase FabZ from Thermosynechococcus vestitus (strain NIES-2133 / IAM M-273 / BP-1).